A 200-amino-acid chain; its full sequence is MAFSPLVDELVESLRCLPGVGQKTAQRMAFHLLERGRSGGTRLAAALNHAMDGVRRCDSCQNFSDTEICQICEKPERRNGTLCVVESPSDLLAIEQAGDYKGSYFVLMGHLSPIDGVGPEEIGIERLLDRVRREGVTELILATNPTVEGEATAHYIADRLDGQNILITRLAHGIPVGGELGYVDGFTLTHAFRGRKPLSE.

The C4-type zinc-finger motif lies at 57-72 (CDSCQNFSDTEICQIC). The 96-residue stretch at 80–175 (GTLCVVESPS…LITRLAHGIP (96 aa)) folds into the Toprim domain.

Belongs to the RecR family.

Functionally, may play a role in DNA repair. It seems to be involved in an RecBC-independent recombinational process of DNA repair. It may act with RecF and RecO. This chain is Recombination protein RecR, found in Marinobacter nauticus (strain ATCC 700491 / DSM 11845 / VT8) (Marinobacter aquaeolei).